Here is a 673-residue protein sequence, read N- to C-terminus: Pesticin receptor (673 aa).

The N-terminal stretch at 1-22 (MKMTRLYPLALGGLLLPAIANA) is a signal peptide. Residues 30–37 (STLEVTAS) carry the TonB box motif. Positions 41–155 (SRSASANNVS…QGGIINIVTQ (115 aa)) constitute a TBDR plug domain. A TBDR beta-barrel domain is found at 160-672 (TPRGYIEGGV…TVGINTRIDF (513 aa)). Positions 657–673 (QVNMGRTVGINTRIDFF) match the TonB C-terminal box motif.

Belongs to the TonB-dependent receptor family.

Its subcellular location is the cell outer membrane. Functionally, receptor for the bacteriocin pesticin and for the siderophore yersiniabactin. The sequence is that of Pesticin receptor (fyuA) from Yersinia enterocolitica serotype O:8 / biotype 1B (strain NCTC 13174 / 8081).